The primary structure comprises 392 residues: THO complex subunit MFT1 (392 aa).

2 stretches are compositionally biased toward acidic residues: residues 258–271 and 290–330; these read DNID…EDEE and NVDE…EVDG. The segment at 258–392 is disordered; that stretch reads DNIDEDYESD…SASSSVEEVK (135 aa). At serine 266 the chain carries Phosphoserine. Residues 331–344 are compositionally biased toward polar residues; sequence ESSQQEDNSRQGNN. The span at 345 to 367 shows a compositional bias: acidic residues; it reads EETDKETGVIEEPDAVNDAEEAD. Residues 377–392 are compositionally biased toward polar residues; it reads GTTSDFSASSSVEEVK.

Component of the THO complex, which is composed of HPR1, MFT1, THO2 and THP2. Together with SUB2, TEX1 and YRA1, THO forms the transcription/export (TREX) complex. THO associates with DNA and RNA in vitro.

It localises to the nucleus. Its function is as follows. Component the THO subcomplex of the TREX complex, which operates in coupling transcription elongation to mRNA export. The THO complex is recruited to transcribed genes and moves along the gene with the elongating polymerase during transcription. THO is important for stabilizing nascent RNA in the RNA polymerase II elongation complex by preventing formation of DNA:RNA hybrids behind the elongating polymerase. It functions in cotranscriptional formation of an export-competent messenger ribonucleoprotein particle (mRNP) by facilitating the loading of ATP-dependent RNA helicase SUB2 and the mRNA export factor YRA1 along the nascent mRNA. This is THO complex subunit MFT1 (MFT1) from Saccharomyces cerevisiae (strain ATCC 204508 / S288c) (Baker's yeast).